Here is a 166-residue protein sequence, read N- to C-terminus: Crossover junction endodeoxyribonuclease RuvC (166 aa).

Catalysis depends on residues Asp-11, Glu-70, and Asp-142. Positions 11, 70, and 142 each coordinate Mg(2+).

This sequence belongs to the RuvC family. As to quaternary structure, homodimer which binds Holliday junction (HJ) DNA. The HJ becomes 2-fold symmetrical on binding to RuvC with unstacked arms; it has a different conformation from HJ DNA in complex with RuvA. In the full resolvosome a probable DNA-RuvA(4)-RuvB(12)-RuvC(2) complex forms which resolves the HJ. Requires Mg(2+) as cofactor.

The protein resides in the cytoplasm. It catalyses the reaction Endonucleolytic cleavage at a junction such as a reciprocal single-stranded crossover between two homologous DNA duplexes (Holliday junction).. In terms of biological role, the RuvA-RuvB-RuvC complex processes Holliday junction (HJ) DNA during genetic recombination and DNA repair. Endonuclease that resolves HJ intermediates. Cleaves cruciform DNA by making single-stranded nicks across the HJ at symmetrical positions within the homologous arms, yielding a 5'-phosphate and a 3'-hydroxyl group; requires a central core of homology in the junction. The consensus cleavage sequence is 5'-(A/T)TT(C/G)-3'. Cleavage occurs on the 3'-side of the TT dinucleotide at the point of strand exchange. HJ branch migration catalyzed by RuvA-RuvB allows RuvC to scan DNA until it finds its consensus sequence, where it cleaves and resolves the cruciform DNA. This chain is Crossover junction endodeoxyribonuclease RuvC, found in Nitratidesulfovibrio vulgaris (strain DP4) (Desulfovibrio vulgaris).